Here is a 154-residue protein sequence, read N- to C-terminus: 6,7-dimethyl-8-ribityllumazine synthase (154 aa).

Residues phenylalanine 23, 57-59, and 81-83 each bind 5-amino-6-(D-ribitylamino)uracil; these read AFE and AVI. (2S)-2-hydroxy-3-oxobutyl phosphate is bound at residue 86-87; sequence ST. Histidine 89 serves as the catalytic Proton donor. Residue phenylalanine 114 coordinates 5-amino-6-(D-ribitylamino)uracil. Arginine 128 is a binding site for (2S)-2-hydroxy-3-oxobutyl phosphate.

It belongs to the DMRL synthase family.

The enzyme catalyses (2S)-2-hydroxy-3-oxobutyl phosphate + 5-amino-6-(D-ribitylamino)uracil = 6,7-dimethyl-8-(1-D-ribityl)lumazine + phosphate + 2 H2O + H(+). The protein operates within cofactor biosynthesis; riboflavin biosynthesis; riboflavin from 2-hydroxy-3-oxobutyl phosphate and 5-amino-6-(D-ribitylamino)uracil: step 1/2. Catalyzes the formation of 6,7-dimethyl-8-ribityllumazine by condensation of 5-amino-6-(D-ribitylamino)uracil with 3,4-dihydroxy-2-butanone 4-phosphate. This is the penultimate step in the biosynthesis of riboflavin. This chain is 6,7-dimethyl-8-ribityllumazine synthase, found in Campylobacter jejuni subsp. doylei (strain ATCC BAA-1458 / RM4099 / 269.97).